The chain runs to 199 residues: Recombination protein RecR (199 aa).

The C4-type zinc finger occupies 57 to 72; the sequence is CQSCRTFTEQSLCPIC. Residues 81–176 enclose the Toprim domain; sequence GVICVVETPA…IISRIAHGVP (96 aa).

The protein belongs to the RecR family.

Its function is as follows. May play a role in DNA repair. It seems to be involved in an RecBC-independent recombinational process of DNA repair. It may act with RecF and RecO. The sequence is that of Recombination protein RecR from Shewanella denitrificans (strain OS217 / ATCC BAA-1090 / DSM 15013).